Reading from the N-terminus, the 346-residue chain is Probable electron transfer flavoprotein subunit alpha, mitochondrial (346 aa).

285-313 (LYVAVGISGAIQHLAGMKESKMIVAINKD) contacts FAD.

Belongs to the ETF alpha-subunit/FixB family. Heterodimer of an alpha and a beta subunit. It depends on FAD as a cofactor.

The protein resides in the mitochondrion matrix. The electron transfer flavoprotein serves as a specific electron acceptor for several dehydrogenases, including five acyl-CoA dehydrogenases, glutaryl-CoA and sarcosine dehydrogenase. It transfers the electrons to the main mitochondrial respiratory chain via ETF-ubiquinone oxidoreductase (ETF dehydrogenase). In Cryptococcus neoformans var. grubii (Filobasidiella neoformans var. grubii), this protein is Probable electron transfer flavoprotein subunit alpha, mitochondrial (ETF1).